A 492-amino-acid polypeptide reads, in one-letter code: 6-phosphogluconate dehydrogenase, decarboxylating 2 (492 aa).

NADP(+)-binding positions include 12-17, 35-37, 77-79, and asparagine 105; these read GLAVMG, NRT, and IKA. Substrate-binding positions include asparagine 105 and 131-133; that span reads SGG. The Proton acceptor role is filled by lysine 185. 188-189 is a binding site for substrate; the sequence is HN. The Proton donor role is filled by glutamate 192. Residues tyrosine 193, lysine 262, arginine 289, arginine 449, and histidine 455 each contribute to the substrate site.

This sequence belongs to the 6-phosphogluconate dehydrogenase family. In terms of assembly, homodimer.

The catalysed reaction is 6-phospho-D-gluconate + NADP(+) = D-ribulose 5-phosphate + CO2 + NADPH. Its pathway is carbohydrate degradation; pentose phosphate pathway; D-ribulose 5-phosphate from D-glucose 6-phosphate (oxidative stage): step 3/3. Its function is as follows. Catalyzes the oxidative decarboxylation of 6-phosphogluconate to ribulose 5-phosphate and CO(2), with concomitant reduction of NADP to NADPH. This is 6-phosphogluconate dehydrogenase, decarboxylating 2 (GND2) from Saccharomyces cerevisiae (strain ATCC 204508 / S288c) (Baker's yeast).